The primary structure comprises 464 residues: DNA primase DnaG (464 aa).

The 75-residue stretch at 171–245 (DTIIIVEGRA…DIDYVARAPK (75 aa)) folds into the Toprim domain. 3 residues coordinate Mg(2+): Glu177, Asp219, and Asp221.

The protein belongs to the archaeal DnaG primase family. As to quaternary structure, forms a ternary complex with MCM helicase and DNA. Mg(2+) is required as a cofactor.

It catalyses the reaction ssDNA + n NTP = ssDNA/pppN(pN)n-1 hybrid + (n-1) diphosphate.. Its function is as follows. RNA polymerase that catalyzes the synthesis of short RNA molecules used as primers for DNA polymerase during DNA replication. This chain is DNA primase DnaG, found in Methanococcus aeolicus (strain ATCC BAA-1280 / DSM 17508 / OCM 812 / Nankai-3).